The chain runs to 217 residues: MGQKVHPIGLRVGIIRDWESKWYAEKDYATLLHEDIKVRKYIETALKDASVSKVEIERAANRVNITIHTAKPGKVIGKGGTEVENLRKYLSELTGKRVHINIIEIKRADLDARLVAENIARQLENRVSFRRAQKQAIQRTIRAGAKGIKTQVSGRLGGADIARAEHYSEGTVPLHTLRADIDYAHAEADTTYGKLGVKVWIYRGEVLPTKKSVEGGK.

Positions 38–106 (VRKYIETALK…RVHINIIEIK (69 aa)) constitute a KH type-2 domain.

Belongs to the universal ribosomal protein uS3 family. Part of the 30S ribosomal subunit. Forms a tight complex with proteins S10 and S14.

Functionally, binds the lower part of the 30S subunit head. Binds mRNA in the 70S ribosome, positioning it for translation. The polypeptide is Small ribosomal subunit protein uS3 (Lysinibacillus sphaericus (strain C3-41)).